The following is an 805-amino-acid chain: MTFRVIIVGGGVAGLTLASAFEKAGIDYILLECRPAFDVAVGASIALSPNGARILDQLGAWEKWLKIAQPLVRWGDRNSKGELIMPRSASTPLAKALTGYDMTFGLRRSLLQTLYDNIEDKSMLLPKKSVINVTCSQEGVAVQCADGCSYEGDILVGADGTYSKVREYMWRLADRDEPGLMDPDKKAMTAEYQCLFGISKASGSIAIGDADFIYDHDRSSFIFSDNCGRICYFILQKMDRVYEMVEIPRFSQANAQAYAQRHADIQIRPDLTFGNLYEHSESSILVALEEAKFKQWSWGRIVCVGDSIHKMTPNLGAGASASIESAAALLNSIKAMFDHSPEEGPTETQIRECFAQYQKSREVRATAIVDASSMTTRLQALRGWFEFLFVRLGMPIMGSFAADMASEIWVGATMLENLAPPKASLRGTLPFNPTQGQGQRESKLKRALLGLPFLALLLVAKTATDAKYASALRGYIWESGGMTSAMGSVPLLQRFYSMKGVGDLWSLRYINYLPDFYETNYESLSQAVSSSIDVGIVMSIWSFESIRRANALTMAQIPTLFTFYGQMAGLGRVSPLYYILYYINSPIEVFKGADMRLMHLNYAIAVLPAIIVSYYIPLSAAFFWPTVSGRKSWLFVWQMHPIWTAITLYLFSRIFPSTVKEDRVHGLRRDLPVIKFSMTVLVIGAAGFWMWSRWTSPSSVARVFFPTAVPSTQAPFAACVCAILKWDMLSTFGSTFLWLGYLIWDLKYAGMMQATWVRVAIYGVAAFVALGPGAAIGLGWLWRENILAHKRHKDAVTEENLAQTR.

The first 20 residues, 1–20 (MTFRVIIVGGGVAGLTLASA), serve as a signal peptide directing secretion. FAD contacts are provided by Glu-32, Ala-46, and Arg-107. Asn-132 carries an N-linked (GlcNAc...) asparagine glycan. Tyr-214 is a catalytic residue. FAD contacts are provided by Asp-306 and Ala-319. Helical transmembrane passes span 551-571 (ALTM…AGLG), 604-624 (IAVL…AFFW), 632-652 (SWLF…YLFS), 671-691 (LPVI…FWMW), 703-723 (VFFP…VCAI), 726-746 (WDML…IWDL), and 761-781 (IYGV…LGWL).

It belongs to the paxM FAD-dependent monooxygenase family.

The protein localises to the membrane. It functions in the pathway secondary metabolite biosynthesis; terpenoid biosynthesis. The protein operates within mycotoxin biosynthesis. Functionally, FAD-dependent monooxygenase; part of the gene cluster that mediates the biosynthesis of the neurotoxin verrucosidin, a methylated alpha-pyrone polyketide that inhibits oxidative phosphorylation in mitochondria and thereby causes neurological diseases. The carbon backbone of verrucosidin is synthesized by the HR-PKS verA, and further modified by the other verrucodidin cluster enzymes. The polypeptide is FAD-dependent monooxygenase verC1 (Penicillium polonicum).